The sequence spans 2087 residues: Rho GTPase-activating protein 32 (2087 aa).

The PX; atypical domain occupies 131 to 245; the sequence is GSIQLSLSEE…LTWMEIDNKG (115 aa). One can recognise an SH3 domain in the interval 259–321; that stretch reads PAVGAAHVIK…PGHCVELINQ (63 aa). The 196-residue stretch at 372–567 folds into the Rho-GAP domain; it reads CDLGEHLLNS…FILNHVDVLF (196 aa). A phosphoserine mark is found at serine 706, serine 709, serine 732, and serine 738. Residues 818 to 858 form a disordered region; sequence FLDSPGYSKDKPSANKKDAETGSSQCQTPGSTASSEPVSPL. Residues 825-837 are compositionally biased toward basic and acidic residues; sequence SKDKPSANKKDAE. A compositionally biased stretch (polar residues) spans 838–854; that stretch reads TGSSQCQTPGSTASSEP. A phosphoserine mark is found at serine 852, serine 856, and serine 892. Positions 927–938 are enriched in low complexity; sequence SNTTAQNASSST. 3 disordered regions span residues 927-1038, 1103-1143, and 1169-1257; these read SNTT…PPKN, PAEQ…EQHH, and VPLD…ENTS. Serine 952 is modified (phosphoserine). Low complexity-rich tracts occupy residues 994–1005 and 1019–1029; these read SVSSSQSKAVAS and QDSVPVSSVSL. Residues 1124-1138 are compositionally biased toward polar residues; sequence TTATGDPTHSNTTES. Residues 1172-1182 are compositionally biased toward basic and acidic residues; that stretch reads DSEKSDDHVSF. The span at 1188–1203 shows a compositional bias: polar residues; that stretch reads GKNSMPTVSFLDQDQS. Serine 1203 carries the phosphoserine modification. The span at 1222 to 1232 shows a compositional bias: basic and acidic residues; that stretch reads DKLHHPLEFAD. An interaction with GAB2 region spans residues 1391 to 1711; sequence RVPLLHLRAE…YSYAGLAPRP (321 aa). Residues arginine 1523 and arginine 1533 each carry the asymmetric dimethylarginine modification. The residue at position 1585 (serine 1585) is a Phosphoserine. Residues 1685 to 2087 are interaction with FYN; it reads PNRDFAFYNP…QHPETQIHAE (403 aa). The interval 1798 to 1896 is disordered; sequence PGKTGLLSVA…QFCESKNGPP (99 aa). Basic and acidic residues predominate over residues 1823-1838; it reads GEDRFYRRHPEAEMDR. Positions 1847-1862 are enriched in polar residues; the sequence is STQPEKPSLPQKQSSL. Basic and acidic residues predominate over residues 1875 to 1889; sequence PEHRAHQEASHRQFC. Arginine 2037 carries the omega-N-methylarginine modification.

It belongs to the PX domain-containing GAP family. In terms of assembly, interacts with NTRK1 (via cytoplasmic domain); the interaction is independent of the phosphorylation state of NTRK1. Interacts with SHC3 (via SH2 domain). Interacts with RASA1 (via SH3 domain); the interaction is necessary for the Ras activation and cell transforming activities of ARHGAP32. Interacts with GAB1 and GAB2. Interacts with CRK and CRKL. Found in a complex with CRKL and BCAR1; upon EGF stimulation BCAR1 may be replaced by EGFR. Interacts with NCK1 (via SH3 domain); NCK1 recruits phosphorylated BCAR1 to the complex. Isoform 2 interacts with FYN; the interaction appears to be dependent on tyrosine phosphorylation of ARHGAP32. Interacts with EGFR; the interaction requires EGF stimulation and is increased by SHC3. Interacts with CDC42; the interaction requires constitutively active CDC42. Interacts with CTNNB1. Interacts with GRIN2B. Interacts with DLG4 and CDH2. Interacts with GPHN. Isoform 2 is phosphorylated on multiple tyrosine residues by FYN. Phosphorylated tyrosine residues undergo dephosphorylation after stimulation of NMDA receptors. Phosphorylated in vitro by CaMK2 in the presence of calmodulin and calcium; which inhibits GAP activity. In terms of tissue distribution, isoform 1 and isoform 2 are highly expressed in brain and testis. Isoform 1 is also expressed in other tissues such as lung, liver and spleen.

It localises to the postsynaptic density. Its subcellular location is the cell projection. The protein localises to the dendritic spine. It is found in the cytoplasm. The protein resides in the cell cortex. It localises to the endosome membrane. Its subcellular location is the golgi apparatus membrane. The protein localises to the endoplasmic reticulum membrane. It is found in the membrane. Its function is as follows. GTPase-activating protein (GAP) promoting GTP hydrolysis on RHOA, CDC42 and RAC1 small GTPases. May be involved in the differentiation of neuronal cells during the formation of neurite extensions. Involved in NMDA receptor activity-dependent actin reorganization in dendritic spines. May mediate cross-talks between Ras- and Rho-regulated signaling pathways in cell growth regulation. Isoform 2 has higher GAP activity. In Homo sapiens (Human), this protein is Rho GTPase-activating protein 32 (ARHGAP32).